The chain runs to 457 residues: Argininosuccinate lyase (457 aa).

It belongs to the lyase 1 family. Argininosuccinate lyase subfamily.

The protein resides in the cytoplasm. The enzyme catalyses 2-(N(omega)-L-arginino)succinate = fumarate + L-arginine. It functions in the pathway amino-acid biosynthesis; L-arginine biosynthesis; L-arginine from L-ornithine and carbamoyl phosphate: step 3/3. The protein is Argininosuccinate lyase of Escherichia coli O1:K1 / APEC.